A 555-amino-acid chain; its full sequence is F-box only protein 33 (555 aa).

One can recognise an F-box domain in the interval 65–111 (AAGAASLPSELIVHIFSFLPAPDRLRASASCSHWRECLFYPALWPQL).

In terms of assembly, part of the SCF (SKP1-CUL1-F-box) E3 ubiquitin-protein ligase complex SCF(FBXO33) formed of CUL1, SKP1, RBX1 and FBXO33. Interacts via its N-terminus with YBX1 CSD domain. Directly interacts with SKP1 and CUL1.

The protein operates within protein modification; protein ubiquitination. Substrate recognition component of a SCF (SKP1-CUL1-F-box protein) E3 ubiquitin-protein ligase complex which mediates the ubiquitination and subsequent proteasomal degradation of target proteins. Probably recognizes and binds to phosphorylated target proteins. Recognizes YBX1. The chain is F-box only protein 33 (FBXO33) from Homo sapiens (Human).